A 496-amino-acid chain; its full sequence is MTTDQLPAELERVHMVGIGGAGMSGIARILLDRGGLVSGSDAKESRGIHALRARGAQIRIGHDASSLDLLPGGPTAVITTHAAIPKTNPELVEARRRGIPVILRPAVLAKLMDGRTTLMVTGTHGKTTTTSMLIVALQHCGRDPSFAVGGEMGEAGTNAHHGSGDCFVAEADESDGSLLEYTPDVAVVTNIETDHLDFYGSADAYVAVFDAFVERLAPGGALVVCVDDPGAAALARRTAELGIRVLRYGSGPHGQAPSGEPLAATLVSWQQQGTEAVAQIRLAGEQQHPLVMRLSVPGRHMALNALGALLAAIEIGAPTEAVLDGLAGFEGVRRRFELVGTAGGSAPSSTVRVFDDYAHHPTEIAATLAAVRTLLEQSGGGRSIAVFQPHLYSRTKAFAEEFGHALDAADEVFVLDVYGAREQPLAGVSGASVAEHVSVPVRYLPDFSAAAEQVAAAAAPGDVIVTMGAGDVTLLGPEIVTALRVRANRGAPGALR.

Glycine 122–threonine 128 serves as a coordination point for ATP.

It belongs to the MurCDEF family.

The protein resides in the cytoplasm. It carries out the reaction UDP-N-acetyl-alpha-D-muramate + L-alanine + ATP = UDP-N-acetyl-alpha-D-muramoyl-L-alanine + ADP + phosphate + H(+). The protein operates within cell wall biogenesis; peptidoglycan biosynthesis. In terms of biological role, cell wall formation. The protein is UDP-N-acetylmuramate--L-alanine ligase of Mycobacterium avium (strain 104).